A 576-amino-acid chain; its full sequence is Probable lysosomal cobalamin transporter (576 aa).

The next 10 membrane-spanning stretches (helical) occupy residues 8–28, 40–60, 98–118, 145–165, 188–208, 312–332, 347–367, 377–397, 419–439, and 503–523; these read LIWAVYAIVVAVLVMVASVFI, VVTFTCIVAITSLLATVLLLP, YLLYSLDAFLCLLAIPFVYFW, TISFIAIVVVLFIVGFLVPVA, VLTFTLGLLITMGLFLYILYT, LLGGIAILLITLMIWISMLLT, GYILSGIGVFNPINWIFVQSA, LTVVVLLLFGSSVVGISTIGI, LTTAMLMLTILALDYSIPMLV, and FFGTVFFWSQFIFLVIYLLVL. The interval 549–576 is disordered; the sequence is RLLTSSARGVGDTYQSVGGRNNFSTRAG. Over residues 561-576 the composition is skewed to polar residues; it reads TYQSVGGRNNFSTRAG. The N-linked (GlcNAc...) asparagine glycan is linked to N570.

This sequence belongs to the LIMR family. LMBRD1 subfamily.

The protein resides in the lysosome membrane. In terms of biological role, probable lysosomal cobalamin transporter. Required to export cobalamin from lysosomes allowing its conversion to cofactors. This chain is Probable lysosomal cobalamin transporter, found in Aspergillus niger (strain ATCC MYA-4892 / CBS 513.88 / FGSC A1513).